A 153-amino-acid chain; its full sequence is Transcription antitermination protein NusB (153 aa).

This sequence belongs to the NusB family.

Functionally, involved in transcription antitermination. Required for transcription of ribosomal RNA (rRNA) genes. Binds specifically to the boxA antiterminator sequence of the ribosomal RNA (rrn) operons. The chain is Transcription antitermination protein NusB from Nitratidesulfovibrio vulgaris (strain ATCC 29579 / DSM 644 / CCUG 34227 / NCIMB 8303 / VKM B-1760 / Hildenborough) (Desulfovibrio vulgaris).